Reading from the N-terminus, the 65-residue chain is uncharacterized protein (65 aa).

The active-site Nucleophile is the C9. The active site involves R15.

The protein belongs to the low molecular weight phosphotyrosine protein phosphatase family.

This is an uncharacterized protein from Synechococcus sp. (strain WH8020).